We begin with the raw amino-acid sequence, 176 residues long: Cytochrome b (176 aa).

3 consecutive transmembrane segments (helical) span residues 33–53 (FGSL…FLAM), 77–98 (WLLR…YLHV), and 113–133 (WNMG…GYVL). Heme b-binding residues include histidine 83 and histidine 97.

Belongs to the cytochrome b family. The cytochrome bc1 complex contains 11 subunits: 3 respiratory subunits (MT-CYB, CYC1 and UQCRFS1), 2 core proteins (UQCRC1 and UQCRC2) and 6 low-molecular weight proteins (UQCRH/QCR6, UQCRB/QCR7, UQCRQ/QCR8, UQCR10/QCR9, UQCR11/QCR10 and a cleavage product of UQCRFS1). This cytochrome bc1 complex then forms a dimer. Heme b is required as a cofactor.

The protein resides in the mitochondrion inner membrane. In terms of biological role, component of the ubiquinol-cytochrome c reductase complex (complex III or cytochrome b-c1 complex) that is part of the mitochondrial respiratory chain. The b-c1 complex mediates electron transfer from ubiquinol to cytochrome c. Contributes to the generation of a proton gradient across the mitochondrial membrane that is then used for ATP synthesis. The sequence is that of Cytochrome b (MT-CYB) from Tomopeas ravum (Blunt-eared bat).